An 857-amino-acid chain; its full sequence is A-kinase anchor protein 1, mitochondrial (857 aa).

The transit peptide at 1–29 (MAIQLRSLFPLALPGMLALLGWWWFFSRK) directs the protein to the mitochondrion. Serine 55 is subject to Phosphoserine. The tract at residues 65–121 (VAPTVTQPPGREEQRCVDKPSTEPLALPRTRQVRRRSESSGNLPSVADTRSQPGPCR) is disordered. A compositionally biased stretch (basic and acidic residues) spans 74–85 (GREEQRCVDKPS). Phosphoserine is present on residues serine 101, serine 103, and serine 164. Over residues 103–116 (SSGNLPSVADTRSQ) the composition is skewed to polar residues. 2 disordered regions span residues 165–198 (ALGK…GDAV) and 260–303 (FVEP…VPEN). Basic and acidic residues predominate over residues 286-299 (SDRDLAGELDKDET). Positions 306–319 (IKQAAFQLISQVIL) are PKA-RII subunit binding domain. Disordered regions lie at residues 336–437 (QVHP…NPRG), 466–497 (STSG…TQPF), and 512–554 (EDGW…QAGS). Polar residues predominate over residues 354–379 (PASQETSLGQDTSDPASTRTGATASP). Position 401 is a phosphothreonine (threonine 401). The span at 466-482 (STSGLEDSCTETISSSG) shows a compositional bias: polar residues. Position 487 is a phosphothreonine (threonine 487). Serine 527 and serine 546 each carry phosphoserine. A compositionally biased stretch (polar residues) spans 545 to 554 (DSPQSVQAGS). The KH domain maps to 561–625 (LIIWEIEVPK…HHVDKALNLI (65 aa)). In terms of domain architecture, Tudor spans 712–771 (PVEITVICAAPGADGAWWRAQVVASYEETNEVEIRYVDYGGYKRVKVDVLRQIRSDFVTL).

In terms of assembly, interacts with SLC8A3. Interacts with CFAP91. Interacts with CLPB. Interacts with NDUFS1. Highest expression in testis, heart, liver, skeletal muscle, intestine and kidney, followed by brain and lung. No expression in spleen. Isoform 1/D-AKAP1A is expressed predominantly in testis whereas isoform 4/D-AKAP1D is expressed primarily in liver. Expression is decreased in hearts of diabetic mice (at protein level).

The protein localises to the mitochondrion outer membrane. Its subcellular location is the mitochondrion. The protein resides in the endoplasmic reticulum. Functionally, differentially targeted protein that binds to type I and II regulatory subunits of protein kinase A. Anchors them to the cytoplasmic face of the mitochondrial outer membrane or allows them to reside in the endoplasmic reticulum. Involved in mitochondrial-mediated antiviral innate immunity. Promotes translocation of NDUFS1 into mitochondria to regulate mitochondrial membrane respiratory chain NADH dehydrogenase (Complex I) activity. Under diabetic conditions, myocardial AKAP1 expression decreases which blocks the translocation of NDUFS1 from the cytosol to mitochondria. Reduction of NDUFS1 in mitochondria decreases ATP production and increases mitochondrial ROS level, which causes mitochondrial dysfunction and cell apoptosis, respectively, thereby leading to cardiac dysfunction. This Mus musculus (Mouse) protein is A-kinase anchor protein 1, mitochondrial.